The sequence spans 689 residues: Elongation factor G (689 aa).

Residues 8–283 (SKCRNIGIMA…AVVDFLPAPN (276 aa)) form the tr-type G domain. GTP-binding positions include 17–24 (AHIDAGKT), 81–85 (DTPGH), and 135–138 (NKMD).

This sequence belongs to the TRAFAC class translation factor GTPase superfamily. Classic translation factor GTPase family. EF-G/EF-2 subfamily.

The protein localises to the cytoplasm. Functionally, catalyzes the GTP-dependent ribosomal translocation step during translation elongation. During this step, the ribosome changes from the pre-translocational (PRE) to the post-translocational (POST) state as the newly formed A-site-bound peptidyl-tRNA and P-site-bound deacylated tRNA move to the P and E sites, respectively. Catalyzes the coordinated movement of the two tRNA molecules, the mRNA and conformational changes in the ribosome. This chain is Elongation factor G, found in Ehrlichia ruminantium (strain Welgevonden).